We begin with the raw amino-acid sequence, 71 residues long: uncharacterized protein (71 aa).

The interval 1–20 is disordered; that stretch reads MQKLNKHLKKKKQKRKKMKK.

This is an uncharacterized protein from Methanocaldococcus jannaschii (strain ATCC 43067 / DSM 2661 / JAL-1 / JCM 10045 / NBRC 100440) (Methanococcus jannaschii).